The chain runs to 274 residues: Thiamine kinase (274 aa).

Belongs to the thiamine kinase family.

The catalysed reaction is thiamine + ATP = thiamine phosphate + ADP + H(+). The protein operates within cofactor biosynthesis; thiamine diphosphate biosynthesis; thiamine phosphate from thiamine: step 1/1. Functionally, catalyzes the ATP-dependent phosphorylation of thiamine to thiamine phosphate. Is involved in thiamine salvage. This chain is Thiamine kinase, found in Escherichia coli O45:K1 (strain S88 / ExPEC).